A 396-amino-acid chain; its full sequence is 1-deoxy-D-xylulose 5-phosphate reductoisomerase (396 aa).

Residues threonine 17, glycine 18, serine 19, isoleucine 20, asparagine 47, and asparagine 130 each contribute to the NADPH site. Lysine 131 lines the 1-deoxy-D-xylulose 5-phosphate pocket. Residue glutamate 132 participates in NADPH binding. Position 156 (aspartate 156) interacts with Mn(2+). Positions 157, 158, 182, and 205 each coordinate 1-deoxy-D-xylulose 5-phosphate. Glutamate 158 contributes to the Mn(2+) binding site. Glycine 211 serves as a coordination point for NADPH. Residues serine 218, asparagine 223, lysine 224, and glutamate 227 each coordinate 1-deoxy-D-xylulose 5-phosphate. Residue glutamate 227 participates in Mn(2+) binding.

The protein belongs to the DXR family. It depends on Mg(2+) as a cofactor. Requires Mn(2+) as cofactor.

The catalysed reaction is 2-C-methyl-D-erythritol 4-phosphate + NADP(+) = 1-deoxy-D-xylulose 5-phosphate + NADPH + H(+). It functions in the pathway isoprenoid biosynthesis; isopentenyl diphosphate biosynthesis via DXP pathway; isopentenyl diphosphate from 1-deoxy-D-xylulose 5-phosphate: step 1/6. Its function is as follows. Catalyzes the NADPH-dependent rearrangement and reduction of 1-deoxy-D-xylulose-5-phosphate (DXP) to 2-C-methyl-D-erythritol 4-phosphate (MEP). The chain is 1-deoxy-D-xylulose 5-phosphate reductoisomerase from Rhizobium johnstonii (strain DSM 114642 / LMG 32736 / 3841) (Rhizobium leguminosarum bv. viciae).